The following is a 252-amino-acid chain: Transcriptional regulatory protein HptR (252 aa).

The Response regulatory domain occupies lysine 3–valine 118. 4-aspartylphosphate is present on aspartate 55. The HTH araC/xylS-type domain maps to asparagine 153–glutamine 250. 2 consecutive DNA-binding regions (H-T-H motif) follow at residues serine 170–valine 191 and histidine 217–leucine 240.

In terms of processing, phosphorylated by HptS.

It is found in the cytoplasm. In terms of biological role, member of the two-component regulatory system HptS/HptR that regulates genes involved in hexose phosphate transport system in response to changes in extracellular phosphate sources. Activates uhpT expression to facilitate glucose-6-phosphate/G6P utilization by directly binding to its promoter. Antagonizes CcpA-dependent transcription of a subset of CcpA-regulated genes involved in antibiotic susceptibility. The polypeptide is Transcriptional regulatory protein HptR (hptR) (Staphylococcus aureus (strain bovine RF122 / ET3-1)).